A 119-amino-acid polypeptide reads, in one-letter code: Small ribosomal subunit protein bS6 (119 aa).

This sequence belongs to the bacterial ribosomal protein bS6 family.

Functionally, binds together with bS18 to 16S ribosomal RNA. This Buchnera aphidicola subsp. Baizongia pistaciae (strain Bp) protein is Small ribosomal subunit protein bS6.